The chain runs to 635 residues: Threonine--tRNA ligase (635 aa).

The 61-residue stretch at Met1 to Thr61 folds into the TGS domain. Residues Asp242–Pro532 are catalytic. Zn(2+) contacts are provided by Cys333, His384, and His509.

The protein belongs to the class-II aminoacyl-tRNA synthetase family. As to quaternary structure, homodimer. The cofactor is Zn(2+).

Its subcellular location is the cytoplasm. It carries out the reaction tRNA(Thr) + L-threonine + ATP = L-threonyl-tRNA(Thr) + AMP + diphosphate + H(+). Functionally, catalyzes the attachment of threonine to tRNA(Thr) in a two-step reaction: L-threonine is first activated by ATP to form Thr-AMP and then transferred to the acceptor end of tRNA(Thr). Also edits incorrectly charged L-seryl-tRNA(Thr). In Acetivibrio thermocellus (strain ATCC 27405 / DSM 1237 / JCM 9322 / NBRC 103400 / NCIMB 10682 / NRRL B-4536 / VPI 7372) (Clostridium thermocellum), this protein is Threonine--tRNA ligase.